Reading from the N-terminus, the 66-residue chain is Large ribosomal subunit protein bL35c (66 aa).

It belongs to the bacterial ribosomal protein bL35 family.

It is found in the plastid. It localises to the chloroplast. The protein is Large ribosomal subunit protein bL35c of Gracilaria tenuistipitata var. liui (Red alga).